Consider the following 109-residue polypeptide: Transcription initiation factor IIA subunit 2 (109 aa).

The protein belongs to the TFIIA subunit 2 family. In terms of assembly, TFIIA is a heterodimer of the large unprocessed subunit 1 and a small subunit gamma. It was originally believed to be a heterotrimer of an alpha (p35), a beta (p19) and a gamma subunit (p12). Interacts with NCOA6 general coactivator. TFIIA forms a complex with TBP. Interacts with HSF1 (via transactivation domain). Part of TBP-based Pol II pre-initiation complex (PIC), in which Pol II core assembles with general transcription factors and other specific initiation factors including GTF2E1, GTF2E2, GTF2F1, GTF2F2, TCEA1, ERCC2, ERCC3, GTF2H2, GTF2H3, GTF2H4, GTF2H5, GTF2A1, GTF2A2, GTF2B and TBP; this large multi-subunit PIC complex mediates DNA unwinding and targets Pol II core to the transcription start site where the first phosphodiester bond forms.

The protein resides in the nucleus. Its function is as follows. TFIIA is a component of the transcription machinery of RNA polymerase II and plays an important role in transcriptional activation. TFIIA in a complex with TBP mediates transcriptional activity. The protein is Transcription initiation factor IIA subunit 2 (Gtf2a2) of Rattus norvegicus (Rat).